We begin with the raw amino-acid sequence, 1002 residues long: yemanuclein (1002 aa).

Positions 80 to 85 (KKKTKK) match the Nuclear localization signal motif. Disordered stretches follow at residues 193–358 (AIIK…KKVV), 395–428 (VSTD…GQEN), and 642–725 (KLKA…AKQV). The span at 207-217 (SSSSESSSSSS) shows a compositional bias: low complexity. A compositionally biased stretch (acidic residues) spans 218 to 262 (GDDDENDDGNNEEDDESDSEDDSEENDESDSEDDSESESLEDEDS). 2 repeat units span residues 230-241 (EDDESDSEDDSE) and 242-253 (ENDESDSEDDSE). Residues 230–253 (EDDESDSEDDSEENDESDSEDDSE) are 2 X 12 AA tandem repeats. Composition is skewed to low complexity over residues 286–320 (TGKS…RPST), 336–358 (QPSS…KKVV), and 395–404 (VSTDVSSSDS). The span at 408-427 (ESEHGRADRQAGQHGKDGQE) shows a compositional bias: basic and acidic residues. Over residues 653–667 (PASASPKPVGVVSAP) the composition is skewed to low complexity. Basic and acidic residues predominate over residues 679 to 689 (AVEDPRSRGNS). Serine 685 and serine 689 each carry phosphoserine. Over residues 690–701 (DTDSATSASSNS) the composition is skewed to low complexity. Residues serine 885, serine 886, and serine 887 each carry the phosphoserine modification. A disordered region spans residues 901–928 (SKPQKKVQSKPKNKTQNRGRSSLGAVGQ). A compositionally biased stretch (basic residues) spans 903 to 917 (PQKKVQSKPKNKTQN).

In terms of processing, the N-terminus is blocked. In terms of tissue distribution, oocyte specific.

The protein resides in the nucleus. The protein localises to the nucleoplasm. It is found in the chromosome. Its subcellular location is the centromere. It localises to the kinetochore. Functionally, may play a key role in egg organization. May be a transcriptional regulator having a role in chromatin remodeling in concert with Hira, a histone chaperone. Involved in chromosome segregation by affecting kinetochores function in the first meiotic division. The protein is yemanuclein of Drosophila melanogaster (Fruit fly).